The sequence spans 58 residues: Large ribosomal subunit protein bL32c (58 aa).

It belongs to the bacterial ribosomal protein bL32 family.

Its subcellular location is the plastid. It localises to the chloroplast. The polypeptide is Large ribosomal subunit protein bL32c (Chaetosphaeridium globosum (Charophycean green alga)).